We begin with the raw amino-acid sequence, 420 residues long: Serine hydroxymethyltransferase (420 aa).

(6S)-5,6,7,8-tetrahydrofolate-binding positions include L123 and 127–129; that span reads GHL. Residue K232 is modified to N6-(pyridoxal phosphate)lysine. 357 to 359 is a binding site for (6S)-5,6,7,8-tetrahydrofolate; that stretch reads SPF.

Belongs to the SHMT family. In terms of assembly, homodimer. Pyridoxal 5'-phosphate is required as a cofactor.

It localises to the cytoplasm. The catalysed reaction is (6R)-5,10-methylene-5,6,7,8-tetrahydrofolate + glycine + H2O = (6S)-5,6,7,8-tetrahydrofolate + L-serine. It participates in one-carbon metabolism; tetrahydrofolate interconversion. Its pathway is amino-acid biosynthesis; glycine biosynthesis; glycine from L-serine: step 1/1. Catalyzes the reversible interconversion of serine and glycine with tetrahydrofolate (THF) serving as the one-carbon carrier. This reaction serves as the major source of one-carbon groups required for the biosynthesis of purines, thymidylate, methionine, and other important biomolecules. Also exhibits THF-independent aldolase activity toward beta-hydroxyamino acids, producing glycine and aldehydes, via a retro-aldol mechanism. The chain is Serine hydroxymethyltransferase from Streptococcus pyogenes serotype M4 (strain MGAS10750).